Here is a 496-residue protein sequence, read N- to C-terminus: UDP-glycosyltransferase 73C2 (496 aa).

Residues Ser297, Ser357–Gln359, His374–Glu382, and Phe396–Gln399 contribute to the UDP-alpha-D-glucose site.

Belongs to the UDP-glycosyltransferase family.

In Arabidopsis thaliana (Mouse-ear cress), this protein is UDP-glycosyltransferase 73C2 (UGT73C2).